The sequence spans 538 residues: ATP synthase subunit beta, mitochondrial (538 aa).

Position 215–222 (215–222 (GGAGVGKT)) interacts with ATP.

Belongs to the ATPase alpha/beta chains family. In terms of assembly, subunit of the F-type ATPase which has 2 components, CF(1) - the catalytic core - and CF(0) - the membrane proton channel. Interacts (via N-terminus) with lov-1 (via PLAT domain). In terms of tissue distribution, expressed in three categories of adult male sensory neurons: tail ray B neurons, HOB hook neuron and head cephalic (CEM) neurons.

It localises to the cell projection. The protein resides in the cilium. The protein localises to the mitochondrion. It is found in the mitochondrion inner membrane. It carries out the reaction ATP + H2O + 4 H(+)(in) = ADP + phosphate + 5 H(+)(out). Mitochondrial membrane ATP synthase (F(1)F(0) ATP synthase or Complex V) produces ATP from ADP in the presence of a proton gradient across the membrane which is generated by electron transport complexes of the respiratory chain. F-type ATPases consist of two structural domains, F(1) - containing the extramembraneous catalytic core, and F(0) - containing the membrane proton channel, linked together by a central stalk and a peripheral stalk. During catalysis, ATP synthesis in the catalytic domain of F(1) is coupled via a rotary mechanism of the central stalk subunits to proton translocation. Subunits alpha and beta form the catalytic core in F(1). Rotation of the central stalk against the surrounding subunits leads to hydrolysis of ATP in three separate catalytic sites on the beta subunits. Required during male mating behavior for the response to hermaphrodite contact, acting with lov-1 and pkd-2. May be involved in polycystin signaling. This is ATP synthase subunit beta, mitochondrial from Caenorhabditis elegans.